A 689-amino-acid polypeptide reads, in one-letter code: Glycine--tRNA ligase beta subunit (689 aa).

Belongs to the class-II aminoacyl-tRNA synthetase family. In terms of assembly, tetramer of two alpha and two beta subunits.

Its subcellular location is the cytoplasm. The catalysed reaction is tRNA(Gly) + glycine + ATP = glycyl-tRNA(Gly) + AMP + diphosphate. The protein is Glycine--tRNA ligase beta subunit of Shewanella baltica (strain OS155 / ATCC BAA-1091).